A 728-amino-acid polypeptide reads, in one-letter code: 1,4-alpha-glucan branching enzyme GlgB (728 aa).

Catalysis depends on D405, which acts as the Nucleophile. E458 acts as the Proton donor in catalysis.

It belongs to the glycosyl hydrolase 13 family. GlgB subfamily. Monomer.

The enzyme catalyses Transfers a segment of a (1-&gt;4)-alpha-D-glucan chain to a primary hydroxy group in a similar glucan chain.. Its pathway is glycan biosynthesis; glycogen biosynthesis. Functionally, catalyzes the formation of the alpha-1,6-glucosidic linkages in glycogen by scission of a 1,4-alpha-linked oligosaccharide from growing alpha-1,4-glucan chains and the subsequent attachment of the oligosaccharide to the alpha-1,6 position. The sequence is that of 1,4-alpha-glucan branching enzyme GlgB from Citrobacter koseri (strain ATCC BAA-895 / CDC 4225-83 / SGSC4696).